Reading from the N-terminus, the 361-residue chain is Inner kinetochore subunit CNN1 (361 aa).

Residues 1 to 22 (MSTPRKAAGNNENTEVSEIRTP) are disordered. Serine 2 is subject to Phosphoserine; by CDK1. Residue threonine 14 is modified to Phosphothreonine; by CDK1 and MPS1. Serine 17 is modified (phosphoserine; by CDK1 and MPS1). Phosphothreonine; by CDK1 is present on residues threonine 21 and threonine 42. The residue at position 50 (serine 50) is a Phosphoserine; by CDK1 and MPS1. Serine 52 carries the phosphoserine; by CDK1 modification. Threonine 53 bears the Phosphothreonine; by MPS1 mark. Phosphoserine; by CDK1 is present on serine 55. The tract at residues 60–84 (NKDPNEVRSFLQDLSQVLARKSQGN) is interacts with the NDC80 complex subunits SPC24 and SPC25 and with the KNL1 complex. Serine 74 carries the post-translational modification Phosphoserine; by CDK1 and MPS1. Phosphothreonine; by MPS1 occurs at positions 86 and 88. Threonine 91 is modified (phosphothreonine; by CDK1 and MPS1). Positions 103–132 (EESQPEENELLRSRSEKLTDNNIGNETQPD) are disordered. The span at 111–121 (ELLRSRSEKLT) shows a compositional bias: basic and acidic residues. A Phosphoserine; by CDK1 modification is found at serine 115. Polar residues predominate over residues 122–132 (DNNIGNETQPD). Threonine 129 carries the phosphothreonine; by CDK1 and MPS1 modification. Threonine 134 carries the phosphothreonine; by MPS1 modification. Serine 135 carries the phosphoserine; by MPS1 modification. Threonine 139 is modified (phosphothreonine; by CDK1 and MPS1). Serine 153 is subject to Phosphoserine; by MPS1. A Phosphothreonine; by MPS1 modification is found at threonine 174. The residue at position 177 (serine 177) is a Phosphoserine; by CDK1. Threonine 191 is modified (phosphothreonine; by CDK1). Serine 192 carries the post-translational modification Phosphoserine; by CDK1. Positions 193 to 255 (PSIGMDQVDE…SDENLDDIGN (63 aa)) are disordered. Over residues 219–254 (PLSEDLPSDDKEETEEAENEDYSFENTSDENLDDIG) the composition is skewed to acidic residues. At serine 268 the chain carries Phosphoserine; by CDK1. Serine 269 bears the Phosphoserine; by MPS1 and IPL1 mark.

The protein belongs to the CENP-T/CNN1 family. As to quaternary structure, component of the inner kinetochore constitutive centromere-associated network (CCAN) (also known as central kinetochore CTF19 complex in yeast), which is composed of at least AME1, CHL4, CNN1, CTF3, CTF19, IML3, MCM16, MCM21, MCM22, MHF1, MHF2, MIF2, NKP1, NKP2, OKP1 and WIP1. Interacts (via N-terminus) with the outer kinetochore NDC80 complex subunits SPC24 (via C-terminus) and SPC25 (via C-terminus); the interaction is direct and contributes to the correct spatiotemporal organization of the KMN network. Interacts with outer kinetochore MIS12 complex subunit NNF1. Interacts (via N-terminus) with the KNL1 complex. Post-translationally, phosphorylation of the C-terminus by MPS1 kinase regulates interaction with the outer kinetochore Ndc80 complex. Phosphorylation levels rise from S-phase and through metaphase, the protein is thendephosphorylated in anaphase.

The protein localises to the nucleus. It is found in the chromosome. The protein resides in the centromere. It localises to the kinetochore. Functionally, component of the kinetochore, a multiprotein complex that assembles on centromeric DNA and attaches chromosomes to spindle microtubules, mediating chromosome segregation and sister chromatid segregation during meiosis and mitosis. Component of the inner kinetochore constitutive centromere-associated network (CCAN), which serves as a structural platform for outer kinetochore assembly. Modulates outer kinetochore KMN network activity by regulating interactions within the network. This is Inner kinetochore subunit CNN1 (CNN1) from Saccharomyces cerevisiae (strain ATCC 204508 / S288c) (Baker's yeast).